The sequence spans 371 residues: Neuropeptide S receptor (371 aa).

Residues 1–21 (MPANFTEGSFDSSGTGQTLDS) are compositionally biased toward polar residues. Residues 1–22 (MPANFTEGSFDSSGTGQTLDSS) are disordered. The Extracellular portion of the chain corresponds to 1–52 (MPANFTEGSFDSSGTGQTLDSSPVACTETVTFTEVVEGKEWGSFYYSFKTEQ). N-linked (GlcNAc...) asparagine glycosylation is present at Asn4. The helical transmembrane segment at 53–73 (LITLWVLFVFTIVGNSVVLFS) threads the bilayer. Topologically, residues 74-82 (TWRRKKKSR) are cytoplasmic. A helical membrane pass occupies residues 83-103 (MTFFVTQLAITDSFTGLVNIL). Residues 104 to 123 (TDINWRFTGDFTAPDLVCRV) lie on the Extracellular side of the membrane. A disulfide bridge links Cys121 with Cys197. Residues 124 to 144 (VRYLQVVLLYASTYVLVSLSI) form a helical membrane-spanning segment. Over 145 to 164 (DRYHAIVYPMKFLQGEKQAR) the chain is Cytoplasmic. A helical transmembrane segment spans residues 165–185 (VLIVIAWSLSFLFSIPTLIIF). Residues 186-212 (GKRTLSNGEVQCWALWPDDSYWTPYMT) lie on the Extracellular side of the membrane. The chain crosses the membrane as a helical span at residues 213–233 (IVAFLVYFIPLTIISIMYGIV). The Cytoplasmic portion of the chain corresponds to 234 to 275 (IRTIWIKSKTYETVISNCSDGKLCSSYNRGLISKAKIKAIKY). Residues 276-296 (SIIIILAFICCWSPYFLFDIL) traverse the membrane as a helical segment. Over 297-312 (DNFNLLPDTQERFYAS) the chain is Extracellular. Residues 313–333 (VIIQNLPALNSAINPLIYCVF) form a helical membrane-spanning segment. Topologically, residues 334 to 371 (SSSISFPCREQRSQDSRMTFRERTERHEMQILSKPEFI) are cytoplasmic.

The protein belongs to the G-protein coupled receptor 1 family. Vasopressin/oxytocin receptor subfamily. Isoform 4 is ubiquitous; it is detected in glandular epithelia of bronchus, stomach, small intestine, colon, uterus, esophagus, spleen, kidney, pancreas, prostate and breast. Isoform 1 is detected in uterus, colon and prostate, and in the smooth muscle cell layer in bronchial and arterial walls (at protein level). Isoform 1 is predominantly expressed in smooth muscle. Isoform 4 is predominantly expressed in epithelial cells. In bronchial biopsies, it is expressed in smooth muscle cells of asthma patients, but not in control patients; whereas in epithelial cells, its expression is consistently stronger in asthma patients.

It localises to the cell membrane. Its subcellular location is the cytoplasm. In terms of biological role, G-protein coupled receptor for neuropeptide S (NPS). Promotes mobilization of intracellular Ca(2+) stores. Inhibits cell growth in response to NPS binding. Involved in pathogenesis of asthma and other IgE-mediated diseases. This is Neuropeptide S receptor (NPSR1) from Homo sapiens (Human).